The following is a 281-amino-acid chain: Undecaprenyl-diphosphatase (281 aa).

8 helical membrane passes run 4–24 (IEIL…WLPI), 45–65 (AFMS…VMVI), 89–109 (WLKV…DDWF), 113–133 (FHNM…FIYL), 152–172 (LPYT…LPGT), 190–210 (SVVT…ASAL), 225–245 (GQLF…MVAI), and 257–277 (FTLF…YSFV).

Belongs to the UppP family.

It is found in the cell membrane. The catalysed reaction is di-trans,octa-cis-undecaprenyl diphosphate + H2O = di-trans,octa-cis-undecaprenyl phosphate + phosphate + H(+). Its function is as follows. Catalyzes the dephosphorylation of undecaprenyl diphosphate (UPP). Confers resistance to bacitracin. This chain is Undecaprenyl-diphosphatase, found in Streptococcus pneumoniae (strain Hungary19A-6).